The primary structure comprises 367 residues: tRNA pseudouridine synthase D (367 aa).

Catalysis depends on D78, which acts as the Nucleophile. The TRUD domain maps to 153–300 (GVPNYFGEQR…KQERRRIRLT (148 aa)).

It belongs to the pseudouridine synthase TruD family.

The catalysed reaction is uridine(13) in tRNA = pseudouridine(13) in tRNA. Responsible for synthesis of pseudouridine from uracil-13 in transfer RNAs. The polypeptide is tRNA pseudouridine synthase D (Colwellia psychrerythraea (strain 34H / ATCC BAA-681) (Vibrio psychroerythus)).